The following is a 132-amino-acid chain: Arsenate reductase 1 (132 aa).

Catalysis depends on nucleophile residues C10, C82, and C89. 2 cysteine pairs are disulfide-bonded: C10/C82 and C82/C89.

This sequence belongs to the low molecular weight phosphotyrosine protein phosphatase family. Thioredoxin-coupled ArsC subfamily.

Its subcellular location is the cytoplasm. It catalyses the reaction arsenate + [thioredoxin]-dithiol + H(+) = arsenite + [thioredoxin]-disulfide + H2O. Its function is as follows. Catalyzes the reduction of arsenate [As(V)] to arsenite [As(III)]. The protein is Arsenate reductase 1 of Staphylococcus epidermidis (strain ATCC 35984 / DSM 28319 / BCRC 17069 / CCUG 31568 / BM 3577 / RP62A).